Reading from the N-terminus, the 193-residue chain is Thymidine kinase (193 aa).

ATP contacts are provided by residues 9-16 (STMNAGKS) and 87-90 (DEAQ). The active-site Proton acceptor is Glu-88. Residues Cys-145, Cys-147, Cys-182, and His-185 each coordinate Zn(2+).

This sequence belongs to the thymidine kinase family. In terms of assembly, homotetramer.

The protein localises to the cytoplasm. The catalysed reaction is thymidine + ATP = dTMP + ADP + H(+). The polypeptide is Thymidine kinase (Haemophilus influenzae (strain 86-028NP)).